Reading from the N-terminus, the 118-residue chain is DNA-directed RNA polymerase subunit omega (118 aa).

A disordered region spans residues Asp-78–Glu-104.

The protein belongs to the RNA polymerase subunit omega family. In terms of assembly, the RNAP catalytic core consists of 2 alpha, 1 beta, 1 beta' and 1 omega subunit. When a sigma factor is associated with the core the holoenzyme is formed, which can initiate transcription.

It carries out the reaction RNA(n) + a ribonucleoside 5'-triphosphate = RNA(n+1) + diphosphate. In terms of biological role, promotes RNA polymerase assembly. Latches the N- and C-terminal regions of the beta' subunit thereby facilitating its interaction with the beta and alpha subunits. This Dinoroseobacter shibae (strain DSM 16493 / NCIMB 14021 / DFL 12) protein is DNA-directed RNA polymerase subunit omega.